Here is a 142-residue protein sequence, read N- to C-terminus: Secreted RxLR effector protein 161 (142 aa).

A signal peptide spans 1 to 27 (MKNVPYLSAVGAIMYLMVVTRPDLAAA). A RxLR motif is present at residues 48 to 51 (RVLR).

The protein belongs to the RxLR effector family.

It is found in the secreted. The protein localises to the host chloroplast envelope. The protein resides in the host nucleus. Functionally, secreted effector that completely suppresses the host cell death induced by cell death-inducing proteins. The sequence is that of Secreted RxLR effector protein 161 from Plasmopara viticola (Downy mildew of grapevine).